We begin with the raw amino-acid sequence, 136 residues long: ATP synthase epsilon chain 2 (136 aa).

The protein belongs to the ATPase epsilon chain family. In terms of assembly, F-type ATPases have 2 components, CF(1) - the catalytic core - and CF(0) - the membrane proton channel. CF(1) has five subunits: alpha(3), beta(3), gamma(1), delta(1), epsilon(1). CF(0) has three main subunits: a, b and c.

It is found in the cell inner membrane. Functionally, produces ATP from ADP in the presence of a proton gradient across the membrane. This is ATP synthase epsilon chain 2 from Nitrobacter hamburgensis (strain DSM 10229 / NCIMB 13809 / X14).